A 309-amino-acid polypeptide reads, in one-letter code: MLDICLLGCGGSLPTSDRNLTSLLISYNGRKILIDCGEGTQVSMKEIAWGFKDIDVICFTHYHADHVMGLTGLLLTIANSGRIDPLTIIGPEGLREVVKGLTVVAPFFPYEIELIELDSKCSDNFLDKVFKIEDVEIFALPVDHSIECLSYSVRVNRKRKFDVNKAKANEVPLKIWNELQRGKEITYENKLYVPDMVLGESRKGIKITYCTDTRPVDSLHKFAYKSDLFVCEGMYGEEEKKEKAVDKKHMIFSEAAGIAKAAEVKELWLTHFSPALSEPEKYLENAKEIFENTHIGSDRKIKIINFENN.

Zn(2+)-binding residues include histidine 61, histidine 63, aspartate 65, histidine 66, histidine 144, aspartate 212, and histidine 271. Aspartate 65 acts as the Proton acceptor in catalysis.

The protein belongs to the RNase Z family. As to quaternary structure, homodimer. It depends on Zn(2+) as a cofactor.

The enzyme catalyses Endonucleolytic cleavage of RNA, removing extra 3' nucleotides from tRNA precursor, generating 3' termini of tRNAs. A 3'-hydroxy group is left at the tRNA terminus and a 5'-phosphoryl group is left at the trailer molecule.. Functionally, zinc phosphodiesterase, which displays some tRNA 3'-processing endonuclease activity. Probably involved in tRNA maturation, by removing a 3'-trailer from precursor tRNA. The sequence is that of Ribonuclease Z from Clostridium acetobutylicum (strain ATCC 824 / DSM 792 / JCM 1419 / IAM 19013 / LMG 5710 / NBRC 13948 / NRRL B-527 / VKM B-1787 / 2291 / W).